A 256-amino-acid chain; its full sequence is Expansin-like B1 (256 aa).

The first 24 residues, 1 to 24, serve as a signal peptide directing secretion; the sequence is MAQLLRRHLPVILSLILFLSKATA. N-linked (GlcNAc...) asparagine glycosylation is present at asparagine 27. The Expansin-like EG45 domain occupies 46-150; the sequence is NGACEYGAFG…RRVSCTYPNK (105 aa). Positions 164–249 constitute an Expansin-like CBD domain; it reads NYLEFEIWYQ…NWTAGATYDS (86 aa). 2 N-linked (GlcNAc...) asparagine glycosylation sites follow: asparagine 189 and asparagine 240.

Belongs to the expansin family. Expansin-like B subfamily.

The protein localises to the secreted. The polypeptide is Expansin-like B1 (EXLB1) (Oryza sativa subsp. japonica (Rice)).